We begin with the raw amino-acid sequence, 592 residues long: Hepatocyte nuclear factor 1-alpha-B (592 aa).

A dimerization region spans residues 1–31; it reads MASQLSYLQQELLRALLESGVTKEALKKALA. One can recognise an HNF-p1 domain in the interval 1–32; that stretch reads MASQLSYLQQELLRALLESGVTKEALKKALAD. A disordered region spans residues 54–78; the sequence is NCVQLPNGLGEPQMSEDESSDDGGD. Over residues 67–77 the composition is skewed to acidic residues; sequence MSEDESSDDGG. Residues 85–180 form the POU-specific atypical domain; sequence KELERLSPEE…IARQFTHAGH (96 aa). Interaction with DNA regions lie at residues 128 to 130, 141 to 147, 153 to 156, 201 to 204, 261 to 263, and 268 to 271; these read QRE, HLSQHLN, KTQK, RFKW, RVY, and NSGK. The short motif at 195 to 203 is the Nuclear localization signal element; that stretch reads KKMRRNRFK. Positions 197 to 277 form a DNA-binding region, homeobox; HNF1-type; the sequence is MRRNRFKWGP…NSGKEEAFRH (81 aa). Composition is skewed to polar residues over residues 284–295 and 306–328; these read YNGQQSSAQPLS and RYTQ…TLSP. Disordered stretches follow at residues 284 to 329 and 511 to 533; these read YNGQ…LSPS and KQVV…HNQD.

Belongs to the HNF1 homeobox family. In terms of assembly, binds DNA as dimer. Forms a homodimer or heterodimer with HNF1-alpha-A. Potentially also form a heterodimer with HNF1-beta. In terms of tissue distribution, liver.

The protein resides in the nucleus. Functionally, transcriptional activator that regulates the tissue specific expression of multiple genes, especially in pancreas and liver. Binds to the hepatocyte specific promoter element HP1. Binds to the inverted palindrome 5'-GTTAATNATTAAC-3'. This is Hepatocyte nuclear factor 1-alpha-B (hnf1a-b) from Xenopus laevis (African clawed frog).